The chain runs to 609 residues: NADH-ubiquinone oxidoreductase chain 5 (609 aa).

A run of 16 helical transmembrane segments spans residues 3-23, 41-61, 90-110, 115-135, 140-160, 174-194, 214-236, 244-264, 276-296, 304-323, 328-350, 368-388, 410-432, 460-480, 491-511, and 585-605; these read VINLFASSIITTLSMLTLPIV, TAISYAFMISMIPTTMFIYSG, MIFVPVALFVTWSIMEFSMWY, PFINRFFKYLLMFLITMMILV, LFQLFIGWEGVGIMSFLLIGW, AVLYNRIGDVGFIMAMAWFLI, VPLMGLLLAATGKSAQFGLHPWL, TPVSALLHSSTMVVAGVFLLI, MQTTTLCLGAITTLFTAICAL, IIAFSTSSQLGLMIVTIGIN, AFLHICTHAFFKAMLFLCSGSII, VLPFTTTSLIVGSLALTGMPF, WALLLTLVATSMTAAYSTRIMFF, LLLGSIFAGYLISYNITPTST, LMALTVTLLGFILALELNLTS, and GLIKLYFLSFIITLILALMMI.

It belongs to the complex I subunit 5 family. In terms of assembly, core subunit of respiratory chain NADH dehydrogenase (Complex I) which is composed of 45 different subunits.

Its subcellular location is the mitochondrion inner membrane. The enzyme catalyses a ubiquinone + NADH + 5 H(+)(in) = a ubiquinol + NAD(+) + 4 H(+)(out). Its function is as follows. Core subunit of the mitochondrial membrane respiratory chain NADH dehydrogenase (Complex I) which catalyzes electron transfer from NADH through the respiratory chain, using ubiquinone as an electron acceptor. Essential for the catalytic activity and assembly of complex I. This Halichoerus grypus (Gray seal) protein is NADH-ubiquinone oxidoreductase chain 5 (MT-ND5).